We begin with the raw amino-acid sequence, 510 residues long: Leucine-rich repeat-containing protein 14B (510 aa).

One copy of the LRR 1; degenerate repeat lies at Ser100 to Thr137. An LRR 2; degenerate repeat occupies Gln181 to Gly205. One copy of the LRR 4; degenerate repeat lies at Phe234 to Gln273. 5 LRR repeats span residues Met274–Leu298, Lys299–Glu330, Val331–Arg349, Ala355–Pro382, and Cys383–Ala407.

The protein belongs to the PRAME family. LRRC14 subfamily.

The protein is Leucine-rich repeat-containing protein 14B of Mus musculus (Mouse).